A 95-amino-acid polypeptide reads, in one-letter code: Large ribosomal subunit protein uL23 (95 aa).

It belongs to the universal ribosomal protein uL23 family. In terms of assembly, part of the 50S ribosomal subunit. Contacts protein L29, and trigger factor when it is bound to the ribosome.

One of the early assembly proteins it binds 23S rRNA. One of the proteins that surrounds the polypeptide exit tunnel on the outside of the ribosome. Forms the main docking site for trigger factor binding to the ribosome. The chain is Large ribosomal subunit protein uL23 from Solibacter usitatus (strain Ellin6076).